The primary structure comprises 121 residues: Large ribosomal subunit protein bL19 (121 aa).

It belongs to the bacterial ribosomal protein bL19 family.

In terms of biological role, this protein is located at the 30S-50S ribosomal subunit interface and may play a role in the structure and function of the aminoacyl-tRNA binding site. The polypeptide is Large ribosomal subunit protein bL19 (rplS) (Chlamydia pneumoniae (Chlamydophila pneumoniae)).